A 91-amino-acid chain; its full sequence is Transcription factor ILI3 (91 aa).

Residues 3–58 (SRRGGGGGGGRITDEEINELISKLQALLPESSRSRGASRSSASKLLKETCSYIKSL) form the bHLH domain.

The protein belongs to the bHLH protein family.

Its function is as follows. Atypical and probable non DNA-binding bHLH transcription that integrates multiple signaling pathways to regulate cell elongation and plant development. The chain is Transcription factor ILI3 (ILI3) from Oryza sativa subsp. indica (Rice).